The chain runs to 160 residues: NADH-quinone oxidoreductase subunit B (160 aa).

Residues cysteine 37, cysteine 38, cysteine 102, and cysteine 132 each contribute to the [4Fe-4S] cluster site.

The protein belongs to the complex I 20 kDa subunit family. As to quaternary structure, NDH-1 is composed of 14 different subunits. Subunits NuoB, C, D, E, F, and G constitute the peripheral sector of the complex. It depends on [4Fe-4S] cluster as a cofactor.

It localises to the cell inner membrane. It catalyses the reaction a quinone + NADH + 5 H(+)(in) = a quinol + NAD(+) + 4 H(+)(out). Functionally, NDH-1 shuttles electrons from NADH, via FMN and iron-sulfur (Fe-S) centers, to quinones in the respiratory chain. Couples the redox reaction to proton translocation (for every two electrons transferred, four hydrogen ions are translocated across the cytoplasmic membrane), and thus conserves the redox energy in a proton gradient. This chain is NADH-quinone oxidoreductase subunit B, found in Neisseria meningitidis serogroup A / serotype 4A (strain DSM 15465 / Z2491).